The primary structure comprises 423 residues: AUGMIN subunit 4 (423 aa).

A coiled-coil region spans residues 267 to 287; it reads IEEIERDEAALREDLYSADRK.

It belongs to the HAUS4 family. In terms of assembly, part of the augmin complex composed of 8 subunits. The complex acts on microtubules and interacts with gamma-tubulin in spindles and the phragmoplast.

Its subcellular location is the cytoplasm. It is found in the cytoskeleton. The protein resides in the spindle. It localises to the phragmoplast. Functionally, involved in microtubules reorganization during spindle and phragmoplast development. This chain is AUGMIN subunit 4 (AUG4), found in Arabidopsis thaliana (Mouse-ear cress).